Here is a 94-residue protein sequence, read N- to C-terminus: Small ribosomal subunit protein bS16 (94 aa).

Belongs to the bacterial ribosomal protein bS16 family.

The protein is Small ribosomal subunit protein bS16 of Thermosipho africanus (strain TCF52B).